We begin with the raw amino-acid sequence, 130 residues long: Fluoride-specific ion channel FluC (130 aa).

4 consecutive transmembrane segments (helical) span residues 3–23 (FVFLWAALGGAIGSSLRYFVG), 39–59 (GTFSVNIIGCFVIGFMGHLAV), 67–87 (FGIFFITGVLGGFTTFSSYGL), and 102–122 (ISYVLGTNILGFIGVAIGWFL). Positions 77 and 80 each coordinate Na(+).

It belongs to the fluoride channel Fluc/FEX (TC 1.A.43) family.

The protein resides in the cell inner membrane. The catalysed reaction is fluoride(in) = fluoride(out). Its activity is regulated as follows. Na(+) is not transported, but it plays an essential structural role and its presence is essential for fluoride channel function. Functionally, fluoride-specific ion channel. Important for reducing fluoride concentration in the cell, thus reducing its toxicity. The polypeptide is Fluoride-specific ion channel FluC (Helicobacter pylori (strain P12)).